Here is a 232-residue protein sequence, read N- to C-terminus: Large ribosomal subunit protein uL1 (232 aa).

It belongs to the universal ribosomal protein uL1 family. Part of the 50S ribosomal subunit.

Its function is as follows. Binds directly to 23S rRNA. The L1 stalk is quite mobile in the ribosome, and is involved in E site tRNA release. In terms of biological role, protein L1 is also a translational repressor protein, it controls the translation of the L11 operon by binding to its mRNA. The sequence is that of Large ribosomal subunit protein uL1 from Aromatoleum aromaticum (strain DSM 19018 / LMG 30748 / EbN1) (Azoarcus sp. (strain EbN1)).